Reading from the N-terminus, the 287-residue chain is NH(3)-dependent NAD(+) synthetase (287 aa).

Residue 53 to 60 participates in ATP binding; sequence GISGGQDS. Asp59 provides a ligand contact to Mg(2+). A deamido-NAD(+)-binding site is contributed by Arg146. Thr166 serves as a coordination point for ATP. Residue Glu171 coordinates Mg(2+). 2 residues coordinate deamido-NAD(+): Lys179 and Asp186. 2 residues coordinate ATP: Lys195 and Thr217. 266 to 267 is a deamido-NAD(+) binding site; the sequence is HK.

The protein belongs to the NAD synthetase family. As to quaternary structure, homodimer.

The catalysed reaction is deamido-NAD(+) + NH4(+) + ATP = AMP + diphosphate + NAD(+) + H(+). It participates in cofactor biosynthesis; NAD(+) biosynthesis; NAD(+) from deamido-NAD(+) (ammonia route): step 1/1. Functionally, catalyzes the ATP-dependent amidation of deamido-NAD to form NAD. Uses ammonia as a nitrogen source. This Deinococcus radiodurans (strain ATCC 13939 / DSM 20539 / JCM 16871 / CCUG 27074 / LMG 4051 / NBRC 15346 / NCIMB 9279 / VKM B-1422 / R1) protein is NH(3)-dependent NAD(+) synthetase.